The sequence spans 103 residues: UPF0473 protein SSA_2239 (103 aa).

This sequence belongs to the UPF0473 family.

This Streptococcus sanguinis (strain SK36) protein is UPF0473 protein SSA_2239.